The primary structure comprises 59 residues: MRKIRGHSVTQGDKEVQGVVSFCVCAGGRVRGLLDRAGGGGEVAWGACGGGVCCVWWWG.

This is an uncharacterized protein from Treponema pallidum (strain Nichols).